The primary structure comprises 904 residues: DNA replication licensing factor MCM2 (904 aa).

Over residues methionine 1–serine 12 the composition is skewed to low complexity. The interval methionine 1–glutamate 166 is disordered. Alanine 2 carries the post-translational modification N-acetylalanine. Positions alanine 2–glutamine 257 are interaction with KAT7. 2 positions are modified to phosphoserine: serine 12 and serine 21. Threonine 25 carries the phosphothreonine modification. A phosphoserine mark is found at serine 26, serine 27, and serine 32. Threonine 39 is subject to Phosphothreonine. Position 40 is a phosphoserine; by CDC7 (serine 40). Serine 41 bears the Phosphoserine mark. At serine 53 the chain carries Phosphoserine; by CDC7. Threonine 59 is modified (phosphothreonine). Residues glycine 61–arginine 130 form an interaction with DNJC9 region. The segment covering proline 62–isoleucine 73 has biased composition (acidic residues). Positions glycine 76–proline 85 are enriched in basic and acidic residues. Over residues aspartate 88–glutamate 104 the composition is skewed to acidic residues. Position 108 is a phosphoserine (serine 108). The segment covering glutamate 111 to glycine 125 has biased composition (basic and acidic residues). Tyrosine 137 is subject to Phosphotyrosine. Phosphoserine occurs at positions 139 and 140. Residue lysine 178 forms a Glycyl lysine isopeptide (Lys-Gly) (interchain with G-Cter in SUMO2) linkage. Lysine 216 is modified (N6-acetyllysine). The C4-type zinc-finger motif lies at cysteine 329–cysteine 355. Residues serine 381 and serine 484 each carry the phosphoserine modification. The 208-residue stretch at isoleucine 473–valine 680 folds into the MCM domain. The ADP site is built by serine 530 and glutamine 531. The Arginine finger signature appears at serine 655–aspartate 658.

It belongs to the MCM family. In terms of assembly, component of the MCM2-7 complex. The complex forms a toroidal hexameric ring with the proposed subunit order MCM2-MCM6-MCM4-MCM7-MCM3-MCM5. Component of the CMG helicase complex, a hexameric ring of related MCM2-7 subunits stabilized by CDC45 and the tetrameric GINS complex. Interacts with DBF4. Interacts with KAT7. May interact with MCM10. Component of the replisome complex composed of at least DONSON, MCM2, MCM7, PCNA and TICRR. Forms a co-chaperone complex with DNAJC9 and histone H3.3-H4 heterodimers. Within the complex, interacts (via N-terminus) with DNAJC9 (via C-terminus); the interaction is histone-dependent. Interacts with AGER/RAGE; the interaction is increased following DNA replication stress and stabilizes the MCM2-7 complex at replication forks. Phosphorylated on Ser-108 by ATR in proliferating cells. Ser-108 proliferation is increased by genotoxic agents. Ser-40 is mediated by the CDC7-DBF4 and CDC7-DBF4B complexes, while Ser-53 phosphorylation is only mediated by the CDC7-DBF4 complex. Phosphorylation by the CDC7-DBF4 complex during G1/S phase is required for the initiation of DNA replication. In terms of processing, acetylated by MCM3AP. Post-translationally, O-glycosylated (O-GlcNAcylated), in a cell cycle-dependent manner.

It is found in the nucleus. The protein localises to the chromosome. The catalysed reaction is ATP + H2O = ADP + phosphate + H(+). Acts as a component of the MCM2-7 complex (MCM complex) which is the replicative helicase essential for 'once per cell cycle' DNA replication initiation and elongation in eukaryotic cells. Core component of CDC45-MCM-GINS (CMG) helicase, the molecular machine that unwinds template DNA during replication, and around which the replisome is built. The active ATPase sites in the MCM2-7 ring are formed through the interaction surfaces of two neighboring subunits such that a critical structure of a conserved arginine finger motif is provided in trans relative to the ATP-binding site of the Walker A box of the adjacent subunit. The six ATPase active sites, however, are likely to contribute differentially to the complex helicase activity. Required for the entry in S phase and for cell division. Plays a role in terminally differentiated hair cells development of the cochlea and induces cells apoptosis. The chain is DNA replication licensing factor MCM2 (Mcm2) from Mus musculus (Mouse).